A 435-amino-acid chain; its full sequence is tRNA(Ile)-lysidine synthase (435 aa).

23 to 28 lines the ATP pocket; the sequence is SGGMDS.

It belongs to the tRNA(Ile)-lysidine synthase family.

Its subcellular location is the cytoplasm. The catalysed reaction is cytidine(34) in tRNA(Ile2) + L-lysine + ATP = lysidine(34) in tRNA(Ile2) + AMP + diphosphate + H(+). Its function is as follows. Ligates lysine onto the cytidine present at position 34 of the AUA codon-specific tRNA(Ile) that contains the anticodon CAU, in an ATP-dependent manner. Cytidine is converted to lysidine, thus changing the amino acid specificity of the tRNA from methionine to isoleucine. In Xanthomonas campestris pv. campestris (strain 8004), this protein is tRNA(Ile)-lysidine synthase.